The chain runs to 464 residues: Fumarate hydratase class II (464 aa).

Substrate contacts are provided by residues 96-98, 127-130, 137-139, and Thr-185; these read SGT, HPND, and SSN. The active-site Proton donor/acceptor is His-186. Ser-316 is an active-site residue. Substrate is bound by residues Ser-317 and 322 to 324; that span reads KVN.

This sequence belongs to the class-II fumarase/aspartase family. Fumarase subfamily. In terms of assembly, homotetramer.

It localises to the cytoplasm. It catalyses the reaction (S)-malate = fumarate + H2O. It participates in carbohydrate metabolism; tricarboxylic acid cycle; (S)-malate from fumarate: step 1/1. Its function is as follows. Involved in the TCA cycle. Catalyzes the stereospecific interconversion of fumarate to L-malate. The polypeptide is Fumarate hydratase class II (Pseudomonas syringae pv. tomato (strain ATCC BAA-871 / DC3000)).